Reading from the N-terminus, the 238-residue chain is Protein shisa-3 homolog (238 aa).

An N-terminal signal peptide occupies residues 1-21 (MGALLAFCLLVGLLRWGPAGA). Residues 22–98 (QQPGEYCHGW…GITAQPVYVP (77 aa)) lie on the Lumenal side of the membrane. Residues 99 to 119 (FLIVGSIFIAFIILGSLVAIY) form a helical membrane-spanning segment. Residues 120–238 (CCTCLRPKEP…GKSCPDFSSS (119 aa)) lie on the Cytoplasmic side of the membrane.

It belongs to the shisa family.

The protein localises to the endoplasmic reticulum membrane. Plays an essential role in the maturation of presomitic mesoderm cells by individual attenuation of both FGF and WNT signaling. This is Protein shisa-3 homolog (Shisa3) from Mus musculus (Mouse).